The chain runs to 510 residues: 2,3-bisphosphoglycerate-independent phosphoglycerate mutase (510 aa).

A Mn(2+)-binding site is contributed by Asp12. Tyr36 is subject to Phosphotyrosine. Ser62 is a Mn(2+) binding site. The Phosphoserine intermediate role is filled by Ser62. Substrate contacts are provided by residues His123, Arg153 to Asp154, Arg185, Arg191, Arg261 to Arg264, and Lys336. Mn(2+) contacts are provided by Asp403, His407, Asp444, His445, and His462.

Belongs to the BPG-independent phosphoglycerate mutase family. As to quaternary structure, monomer. It depends on Mn(2+) as a cofactor.

The catalysed reaction is (2R)-2-phosphoglycerate = (2R)-3-phosphoglycerate. It functions in the pathway carbohydrate degradation; glycolysis; pyruvate from D-glyceraldehyde 3-phosphate: step 3/5. In terms of biological role, essential for rapid growth and for sporulation. Catalyzes the interconversion of 2-phosphoglycerate and 3-phosphoglycerate. This chain is 2,3-bisphosphoglycerate-independent phosphoglycerate mutase, found in Halalkalibacterium halodurans (strain ATCC BAA-125 / DSM 18197 / FERM 7344 / JCM 9153 / C-125) (Bacillus halodurans).